The sequence spans 752 residues: Conserved oligomeric Golgi complex subunit 6 (752 aa).

Disordered stretches follow at residues 1–36 (MASY…RSNA), 601–620 (SSTN…KQPQ), and 702–736 (VTRD…GLGL). Positions 9–25 (AASSHVSTRSSSPASSP) are enriched in low complexity. A compositionally biased stretch (polar residues) spans 601 to 619 (SSTNGPSDTANDGQQQKQP). The span at 702-721 (VTRDRAVEDDSASDSDKDKD) shows a compositional bias: basic and acidic residues.

This sequence belongs to the COG6 family.

It is found in the golgi apparatus membrane. Its function is as follows. Acts as a component of the peripheral membrane COG complex that is involved in intra-Golgi protein trafficking. COG is located at the cis-Golgi, and regulates tethering of retrograde intra-Golgi vesicles and possibly a number of other membrane trafficking events. In Aspergillus terreus (strain NIH 2624 / FGSC A1156), this protein is Conserved oligomeric Golgi complex subunit 6 (cog6).